Consider the following 364-residue polypeptide: Histidinol-phosphate aminotransferase (364 aa).

Residue Lys-225 is modified to N6-(pyridoxal phosphate)lysine.

Belongs to the class-II pyridoxal-phosphate-dependent aminotransferase family. Histidinol-phosphate aminotransferase subfamily. Homodimer. Requires pyridoxal 5'-phosphate as cofactor.

The enzyme catalyses L-histidinol phosphate + 2-oxoglutarate = 3-(imidazol-4-yl)-2-oxopropyl phosphate + L-glutamate. It functions in the pathway amino-acid biosynthesis; L-histidine biosynthesis; L-histidine from 5-phospho-alpha-D-ribose 1-diphosphate: step 7/9. The sequence is that of Histidinol-phosphate aminotransferase from Sulfurovum sp. (strain NBC37-1).